Consider the following 123-residue polypeptide: Late histone H2B.L3 (123 aa).

The segment covering 1 to 10 has biased composition (low complexity); the sequence is MPAKAQAAGK. Positions 1–32 are disordered; sequence MPAKAQAAGKKGSKKAKAPKPSGDKKRRRKRK. S110 carries an O-linked (GlcNAc) serine glycan. Residue K118 forms a Glycyl lysine isopeptide (Lys-Gly) (interchain with G-Cter in ubiquitin) linkage.

It belongs to the histone H2B family. In terms of assembly, the nucleosome is a histone octamer containing two molecules each of H2A, H2B, H3 and H4 assembled in one H3-H4 heterotetramer and two H2A-H2B heterodimers. The octamer wraps approximately 147 bp of DNA. Monoubiquitination of Lys-118 gives a specific tag for epigenetic transcriptional activation and is also prerequisite for histone H3 'Lys-4' and 'Lys-79' methylation. Post-translationally, glcNAcylation at Ser-110 promotes monoubiquitination of Lys-118. It fluctuates in response to extracellular glucose, and associates with transcribed genes.

The protein localises to the nucleus. It is found in the chromosome. Functionally, core component of nucleosome. Nucleosomes wrap and compact DNA into chromatin, limiting DNA accessibility to the cellular machineries which require DNA as a template. Histones thereby play a central role in transcription regulation, DNA repair, DNA replication and chromosomal stability. DNA accessibility is regulated via a complex set of post-translational modifications of histones, also called histone code, and nucleosome remodeling. In Strongylocentrotus purpuratus (Purple sea urchin), this protein is Late histone H2B.L3.